The following is a 313-amino-acid chain: Probable myosin light chain kinase DDB_G0292624 (313 aa).

Residues Tyr-6–Ile-264 form the Protein kinase domain. ATP-binding positions include Ile-12 to Val-20 and Lys-35. The active-site Proton acceptor is Asp-125.

This sequence belongs to the protein kinase superfamily. CAMK Ser/Thr protein kinase family. CaMK subfamily.

The catalysed reaction is L-seryl-[myosin light chain] + ATP = O-phospho-L-seryl-[myosin light chain] + ADP + H(+). It catalyses the reaction L-threonyl-[myosin light chain] + ATP = O-phospho-L-threonyl-[myosin light chain] + ADP + H(+). Does not have a calmodulin-binding domain. May phosphorylate a specific serine in the N-terminus of a myosin light chain. This Dictyostelium discoideum (Social amoeba) protein is Probable myosin light chain kinase DDB_G0292624.